Consider the following 332-residue polypeptide: tRNA dimethylallyltransferase (332 aa).

14-21 lines the ATP pocket; it reads GPTASGKT. Substrate is bound at residue 16 to 21; the sequence is TASGKT. Residues 39-42 form an interaction with substrate tRNA region; the sequence is DSMQ. Residues 312–332 form a disordered region; it reads NKRSSNHDCKRKHPRPSTREL. A compositionally biased stretch (basic residues) spans 320–332; sequence CKRKHPRPSTREL.

Belongs to the IPP transferase family. As to quaternary structure, monomer. The cofactor is Mg(2+).

It catalyses the reaction adenosine(37) in tRNA + dimethylallyl diphosphate = N(6)-dimethylallyladenosine(37) in tRNA + diphosphate. Functionally, catalyzes the transfer of a dimethylallyl group onto the adenine at position 37 in tRNAs that read codons beginning with uridine, leading to the formation of N6-(dimethylallyl)adenosine (i(6)A). In Staphylococcus epidermidis (strain ATCC 35984 / DSM 28319 / BCRC 17069 / CCUG 31568 / BM 3577 / RP62A), this protein is tRNA dimethylallyltransferase.